Here is a 193-residue protein sequence, read N- to C-terminus: Ion-translocating oxidoreductase complex subunit A (193 aa).

The next 6 membrane-spanning stretches (helical) occupy residues 5 to 25, 39 to 59, 63 to 83, 102 to 122, 134 to 154, and 171 to 191; these read LLLL…FLGL, VGMG…SYLM, ILIP…VIAV, LLGI…VALL, IIYG…FAAM, and SIAM…TGLI.

It belongs to the NqrDE/RnfAE family. As to quaternary structure, the complex is composed of six subunits: RnfA, RnfB, RnfC, RnfD, RnfE and RnfG.

It localises to the cell inner membrane. Part of a membrane-bound complex that couples electron transfer with translocation of ions across the membrane. The protein is Ion-translocating oxidoreductase complex subunit A of Aeromonas salmonicida (strain A449).